A 44-amino-acid polypeptide reads, in one-letter code: Protein PsbN (44 aa).

Residues phenylalanine 7–glycine 29 traverse the membrane as a helical segment.

The protein belongs to the PsbN family.

It localises to the plastid. The protein localises to the chloroplast thylakoid membrane. Functionally, may play a role in photosystem I and II biogenesis. The chain is Protein PsbN from Pleurastrum terricola (Filamentous green alga).